Consider the following 233-residue polypeptide: Glucosamine-6-phosphate deaminase (233 aa).

The Proton acceptor; for enolization step role is filled by aspartate 62. Asparagine 128 acts as the For ring-opening step in catalysis. Histidine 130 acts as the Proton acceptor; for ring-opening step in catalysis. The active-site For ring-opening step is the glutamate 135.

It belongs to the glucosamine/galactosamine-6-phosphate isomerase family. NagB subfamily.

It carries out the reaction alpha-D-glucosamine 6-phosphate + H2O = beta-D-fructose 6-phosphate + NH4(+). It participates in amino-sugar metabolism; N-acetylneuraminate degradation; D-fructose 6-phosphate from N-acetylneuraminate: step 5/5. Catalyzes the reversible isomerization-deamination of glucosamine 6-phosphate (GlcN6P) to form fructose 6-phosphate (Fru6P) and ammonium ion. The polypeptide is Glucosamine-6-phosphate deaminase (Streptococcus thermophilus (strain ATCC BAA-491 / LMD-9)).